Consider the following 489-residue polypeptide: ATP synthase subunit beta 1 (489 aa).

159–166 (GGAGVGKT) lines the ATP pocket. Residues 465-477 (EKSKKAAEDKPKA) are compositionally biased toward basic and acidic residues. Residues 465-489 (EKSKKAAEDKPKAEEDEDATSLHDA) are disordered.

Belongs to the ATPase alpha/beta chains family. As to quaternary structure, F-type ATPases have 2 components, CF(1) - the catalytic core - and CF(0) - the membrane proton channel. CF(1) has five subunits: alpha(3), beta(3), gamma(1), delta(1), epsilon(1). CF(0) has three main subunits: a(1), b(2) and c(9-12). The alpha and beta chains form an alternating ring which encloses part of the gamma chain. CF(1) is attached to CF(0) by a central stalk formed by the gamma and epsilon chains, while a peripheral stalk is formed by the delta and b chains.

It is found in the cell inner membrane. It catalyses the reaction ATP + H2O + 4 H(+)(in) = ADP + phosphate + 5 H(+)(out). Produces ATP from ADP in the presence of a proton gradient across the membrane. The catalytic sites are hosted primarily by the beta subunits. The sequence is that of ATP synthase subunit beta 1 from Marinomonas sp. (strain MWYL1).